We begin with the raw amino-acid sequence, 943 residues long: MTDYKATLNLPDTAFPMKAGLPQREPQTLQRWDSIGLYQKLREIGKDRPKFVLHDGPPYANGNIHIGHAVNKILKDMILRSKTLAGFDAPYVPGWDCHGLPIEHKVEVTHGKNLSADRTRELCRAYASEQIEGQKSEFIRLGVLGDWSNPYLTMNFANEAGEIRALAEMVKGGFVFKGLKPVNWCFDCGSALAEAEVEYQDKKSSTIDVAFLIADEAKLAAAFGLPALGKPASIVIWTTTPWTIPANQALNVHPEFEYALVDVGDKLLVLAAELVESCLARYKLEGTVIATTTGQALELINFRHPFYDRLSPVYLADYVELGAGTGIVHSSPAYGVDDFNICKQYGLSNDDIISPVQSNGVYVESLEFFGGQFIFKANQNIIDKLVEVGSLMDTETISHSYMHCWRHKSPLIYRATAQWFVGMDKQPESGETLRKRAVKAIEDTEFVPAWGQARLHSMIANRPDWCISRQRNWGVPIPFFLHKESGDLHPRTVELMEEVAQRVEKEGIEAWFKLDASELLGDEAAKYDKISDTLDVWFDSGTTHWHVLRGSHPMGHESGPRADLYLEGSDQHRGWFHSSLLTGCMLDDHAPYRELLTHGFVVDENGRKMSKSLNNVVAPQKVNDSLGADIMRLWVSATDYSGEMAVSDQILQRSADAYRRIRNTARFLLSNLSGFNPATDILPAEEMLALDRWAVDRTLLLQRELQEHYGEYRFWNVYSKIHNFCVQELGGFYLDIIKDRQYTTAADSTARRSCQTALFHISEALVRWITPILAFTADELWQFLPGERNESVMLNTWYEGLTEMPADFEMDRAYWERIMAVKTSVNKEMENLRAAKAIGGNLQAEVTLYAEDSLIADLSKLSNELRFVLITSTASVAPLVSAPADAVVTEVAGLKLKVLKSSHAKCARCWHHREDVGVNPEHPEICGRCVDNISGAGEVRHYA.

Positions 58–68 (PYANGNIHIGH) match the 'HIGH' region motif. Glutamate 567 is a binding site for L-isoleucyl-5'-AMP. A 'KMSKS' region motif is present at residues 608–612 (KMSKS). Lysine 611 provides a ligand contact to ATP. Zn(2+)-binding residues include cysteine 906, cysteine 909, cysteine 926, and cysteine 929.

It belongs to the class-I aminoacyl-tRNA synthetase family. IleS type 1 subfamily. In terms of assembly, monomer. Zn(2+) is required as a cofactor.

It is found in the cytoplasm. The catalysed reaction is tRNA(Ile) + L-isoleucine + ATP = L-isoleucyl-tRNA(Ile) + AMP + diphosphate. In terms of biological role, catalyzes the attachment of isoleucine to tRNA(Ile). As IleRS can inadvertently accommodate and process structurally similar amino acids such as valine, to avoid such errors it has two additional distinct tRNA(Ile)-dependent editing activities. One activity is designated as 'pretransfer' editing and involves the hydrolysis of activated Val-AMP. The other activity is designated 'posttransfer' editing and involves deacylation of mischarged Val-tRNA(Ile). This chain is Isoleucine--tRNA ligase, found in Pseudomonas savastanoi pv. phaseolicola (strain 1448A / Race 6) (Pseudomonas syringae pv. phaseolicola (strain 1448A / Race 6)).